The following is a 338-amino-acid chain: Methionine synthase (338 aa).

Zn(2+) contacts are provided by H210, C212, E234, and C294.

This sequence belongs to the archaeal MetE family. It depends on Zn(2+) as a cofactor.

Its pathway is amino-acid biosynthesis; L-methionine biosynthesis via de novo pathway. Catalyzes the transfer of a methyl group to L-homocysteine resulting in methionine formation. The physiological methyl donor is unknown. In Pyrococcus horikoshii (strain ATCC 700860 / DSM 12428 / JCM 9974 / NBRC 100139 / OT-3), this protein is Methionine synthase.